A 734-amino-acid chain; its full sequence is Subtilisin-like protease (734 aa).

The N-terminal stretch at 1–20 is a signal peptide; it reads MTCICIFSIAFLLSFHLTTA. The Inhibitor I9 domain occupies 28–109; that stretch reads TYIVHVDKPD…AKLEKVLTLH (82 aa). A Peptidase S8 domain is found at 114–591; the sequence is PNFLGLYQNM…AGHVNPSKAS (478 aa). The active-site Charge relay system is Asp-141. Asn-172 carries an N-linked (GlcNAc...) asparagine glycan. The Charge relay system role is filled by His-199. N-linked (GlcNAc...) asparagine glycans are attached at residues Asn-222 and Asn-306. Positions 357 to 442 constitute a PA domain; the sequence is PLVYPGTSDE…THVGYAAGEM (86 aa). N-linked (GlcNAc...) asparagine glycosylation is found at Asn-448 and Asn-509. Ser-524 (charge relay system) is an active-site residue. Asn-652 carries N-linked (GlcNAc...) asparagine glycosylation.

It belongs to the peptidase S8 family.

It localises to the secreted. The protein localises to the extracellular space. It is found in the apoplast. Required for arbuscular mycorrhiza (AM) development during AM symbiosis with AM fungi (e.g. Glomeromycota intraradices). The sequence is that of Subtilisin-like protease from Petunia hybrida (Petunia).